A 143-amino-acid polypeptide reads, in one-letter code: MNRRKSREVAMRLLFQTTLNGENLEEALENLKDVRESEEITKEKDYESVDLKDVDIDYVKRIIKGIEENKEEIDEKIKGNLKNWKIERLSKVDLSILRLCTYELKFEEDIPNRVSINEAIELAKKYSGEKSATFINGVLGKMI.

It belongs to the NusB family.

Functionally, involved in transcription antitermination. Required for transcription of ribosomal RNA (rRNA) genes. Binds specifically to the boxA antiterminator sequence of the ribosomal RNA (rrn) operons. The chain is Transcription antitermination protein NusB from Clostridium botulinum (strain Kyoto / Type A2).